The following is a 203-amino-acid chain: Small ribosomal subunit protein uS4c (203 aa).

The interval 19–43 is disordered; the sequence is PGLTNKSPKAGSDLRKQPRSRKKSQ. The S4 RNA-binding domain maps to 89 to 152; it reads MRLDNILFRL…KSRTLIQNSL (64 aa).

This sequence belongs to the universal ribosomal protein uS4 family. As to quaternary structure, part of the 30S ribosomal subunit. Contacts protein S5. The interaction surface between S4 and S5 is involved in control of translational fidelity.

It is found in the plastid. The protein localises to the chloroplast. Its function is as follows. One of the primary rRNA binding proteins, it binds directly to 16S rRNA where it nucleates assembly of the body of the 30S subunit. In terms of biological role, with S5 and S12 plays an important role in translational accuracy. The protein is Small ribosomal subunit protein uS4c (rps4) of Jasminum nudiflorum (Winter jasmine).